The chain runs to 419 residues: Putative nucleobase-ascorbate transporter 9 (419 aa).

The span at 1–22 shows a compositional bias: gly residues; the sequence is MANGAGNGGGGAGGNGGGGNNG. Residues 1–28 are disordered; sequence MANGAGNGGGGAGGNGGGGNNGAGNRAE. 10 helical membrane-spanning segments follow: residues 64-84, 91-111, 113-133, 153-173, 184-204, 220-240, 273-293, 313-333, 334-354, and 370-390; these read LLSL…MGGG, VIQT…FFGT, LPVI…IIYS, IQGA…LGVW, SIAP…FPLV, GMML…SSGV, SFAM…LFYA, RVIQ…KFGA, FFAS…LCFV, and FNTK…PQYF.

The protein belongs to the nucleobase:cation symporter-2 (NCS2) (TC 2.A.40) family.

Its subcellular location is the membrane. The protein is Putative nucleobase-ascorbate transporter 9 (NAT9) of Arabidopsis thaliana (Mouse-ear cress).